A 363-amino-acid chain; its full sequence is Cytoplasmic tRNA 2-thiolation protein 1 (363 aa).

Positions 340–363 (ASLNGTPRTPPTPAEPVEGIERAA) are disordered.

The protein belongs to the TtcA family. CTU1/NCS6/ATPBD3 subfamily.

It is found in the cytoplasm. It functions in the pathway tRNA modification; 5-methoxycarbonylmethyl-2-thiouridine-tRNA biosynthesis. Functionally, plays a central role in 2-thiolation of mcm(5)S(2)U at tRNA wobble positions of tRNA(Lys), tRNA(Glu) and tRNA(Gln). Directly binds tRNAs and probably acts by catalyzing adenylation of tRNAs, an intermediate required for 2-thiolation. It is unclear whether it acts as a sulfurtransferase that transfers sulfur from thiocarboxylated URM1 onto the uridine of tRNAs at wobble position. Prior mcm(5) tRNA modification by the elongator complex is required for 2-thiolation. May also be involved in protein urmylation. This is Cytoplasmic tRNA 2-thiolation protein 1 from Cryptococcus neoformans var. neoformans serotype D (strain B-3501A) (Filobasidiella neoformans).